The chain runs to 426 residues: Glutamate/glutamine/aspartate/asparagine transport system permease protein BztB (426 aa).

8 helical membrane passes run 25 to 45 (SITI…WLLN), 96 to 116 (LLVS…IGVL), 132 to 152 (VETF…TILA), 211 to 231 (LPVS…FWGW), 252 to 272 (WWPS…GLGF), 293 to 313 (SFTA…AEIV), 340 to 360 (SLVI…SQFL), and 396 to 416 (MLLM…LMNL). The region spanning 92 to 414 (LLNTLLVSVL…TISLTISSLM (323 aa)) is the ABC transmembrane type-1 domain.

This sequence belongs to the binding-protein-dependent transport system permease family. HisMQ subfamily. In terms of assembly, bztB and BztC form a heterodimer which can form a membrane complex with a homodimer of BztD.

Its subcellular location is the cell inner membrane. Its function is as follows. Part of a binding-protein-dependent transport system for glutamate, glutamine, aspartate and asparagine. Probably responsible for the translocation of the substrate across the membrane. The chain is Glutamate/glutamine/aspartate/asparagine transport system permease protein BztB (bztB) from Rhodobacter capsulatus (strain ATCC BAA-309 / NBRC 16581 / SB1003).